A 2073-amino-acid chain; its full sequence is MIIKKKKDWRTQLFNRSQKKTIERMRKERNNQSVEMDSHTFNNNNNNNNNNNINNNNNINNNNNNNNNNNNNNNSINNYGHQHLNSSSSSQSFQDQLVQDLQSILMAQQHNIISPQLQQQQQQQQQQQPSFNSNNNNNNNTNTYNFQPEAIENNNIGINSNGYNPIQQQFQQQHQLQQQIQQQQIQFQNQNQNQQTHQNRQLQQQQQHQIQQLQLQQQLQQQLQQQQQHQQQLQQQMQHQQMQQQQIPHHQQNQQLQQQQQQQVPHQQQNQLIQQQQQQQQQQQQQQQHQQHQQHQQHQQQHQQHQQQHQQHQQQHQHQHQQQHQQQQQPQNQQQQQPQNQQMQQQQQQNQQMQQQQQQNQQMQQQMQQQQQLQQQQQILQQQQQIQQQQQQQQQILQPQQQPQQQQQQQQLLQQQQQQQLMQQQQQQQQQQQQQQQQQQQQQQQQQQQQQQQPQQQQQIQQQQPQQQPQQQQQPQQQQSQQQPQPQQQQQQQQQQQQQQQQIQQQYVDDNGDNTLLIFISNMCRNVEIPAFSVQPDQYYQYFVEKIVVIWSDLISSSGSTKMTHEETQQQKSSLFEQCRRIIVTYPHFFNQIITERFIFDLEDLNSKISDIFKQFNNNNNNNNNNAIENSPIMAEQYKRFQTDYIIKFDQLQCFKFPDYSLSSIISTLNPSPLRQQQQQQQQQQQQQQQQQQQQQQQQQQQIQIQNQTIPIPPSPQPTQQYQPITQLDQQPQPQPQPQLQQQLQQTILDNNNNNNTNNTNNTNTINNNLDISNDIINSSNNIGLCSSPISLENEKGNNNNNNNKINNNNNTSSSSSITIPINNTTSSPINKNINDDINNNNNNNNSNNNNNNNNNNNNNNNNNNTNTNNEIKKTNNDISTNLSMPTVVDLNSSNNITSSTFLLNPNINNNNNNNSSGGGGSSSSSNSNSSSPNIPNKPKKPVKSNSKKVIDLLEDNDSDSSDSSDSSDSSDSSDSSDSSDSDSSDSSDSSDSSDDEKKKKPKKPIVNKKNLVKTNTSTNSKDSKPASTATSTTTTTTNSKPSITQPTSKIKPSSTIPSQPTSITTKKKPENSTTSLPASTSSSSPSNTVIKSSPPISKTLPTPTSTTSLSSSSSATVNKPIPPTTKKPISTINNNTLNNNTNSSINKIASNSTSTLGNKNLGTPSNYNNNNNNIGAEKKKEKALTLTESQLTNEKELPSLTDYIAQLNKIKKSNTTSGVTNSNNNNNNNNNNNNNNNNNNNNNNNNNKGTTTSTTTVINDPNKKKISWKDEKGGCSVVDRVPMFIQEFSECVTWPRIREFLIVIDSKMSNACKKRFLELGGLANIHTVLKYSQETVTIPRDTIIALKGLKGLPVTVEHLHAEKLIGKTIRSFKKHSNPNVKEYAEELESEWMYLIKGGATSNTSSTTSSASSSSSSSISNGNNSDKKRNRDQPITDTSKKLKSSSSSSSSSSSSSSSTNARSSSPVPNTQLPPKKSIIKEYDDLFMNKLSTPSSSSSSSSSSSSSSTTTTTTSTGSTIPLSPPPSSSSSSNNNNSLSPIMTFKTKQSIAAAAAKKQQTQELSDSTAKSLSSNGATTKLFAAMVDKKSQTKPGGGSGGSSNVSGKSDSSQTLLESIGISWDTPTKEEEDLTPVPDPNRRKSSKGKVSVKWLSDEKLVNVKEFCKEEIADAKANEEYELEQSKRFELETERLLGFKPMKATLEWKKPIPIEDTQLPDIKLYGSESLEKDIQFERENFTLMEFYIGSNIPDTPKEPDDEQKDYDDKDVLIIPSGDINDVFDDSKINELMNVIPPILSDQINDDNIINNNNNTHSNSPDENNTKMINDENNDPNNTGSSNKVVEMIANIDPNNNNNNNNINNNNNIINNINNNNNNNMNNNNMGNMNNMGNMNNQFNNMNNNNNNNQFNNGYNNNNNNNNNNNNNNNNNNNNMMGYNNGYNMNNGNQFNNNYNGVYQNNGFNNFNNQYNNGQYNGYNNSNGQFNNNNNNVYNNNNNNQFNNNFNQYNNNNNNNFNQNFNNGFNNNNNNNNQYNNGYNNFNNNNNYGNMNNYNNNNNNYYNNNNNNNNNNNNNQSYS.

Disordered regions lie at residues 22–94 (IERM…QSFQ), 115–146 (PQLQQQQQQQQQQQPSFNSNNNNNNNTNTYNF), 241–260 (QMQQQQIPHHQQNQQLQQQQ), and 287–334 (QQHQ…QNQQ). Positions 31–41 (NQSVEMDSHTF) are enriched in polar residues. Low complexity predominate over residues 42 to 78 (NNNNNNNNNNNINNNNNINNNNNNNNNNNNNNNSINN). Coiled-coil stretches lie at residues 166 to 453 (IQQQ…QQQQ) and 674 to 710 (LRQQQQQQQQQQQQQQQQQQQQQQQQQQQIQIQNQTI). Low complexity-rich tracts occupy residues 287–314 (QQHQQHQQHQQHQQQHQQHQQQHQQHQQ) and 322–334 (QQHQQQQQPQNQQ). Disordered regions lie at residues 796–879 (KGNN…NNDI), 908–1175 (INNN…NNNI), 1215–1260 (NTTS…TVIN), 1403–1475 (NTSS…LPPK), 1489–1539 (KLST…SLSP), 1551–1571 (AAAAKKQQTQELSDSTAKSLS), 1587–1645 (KSQT…SKGK), 1804–1836 (INNNNNTHSNSPDENNTKMINDENNDPNNTGSS), 1868–1935 (NNNN…GYNN), and 2019–2073 (FNNN…QSYS). Composition is skewed to low complexity over residues 798–870 (NNNN…NTNN) and 923–937 (SSSSNSNSSSPNIPN). Basic residues predominate over residues 938-947 (KPKKPVKSNS). A compositionally biased stretch (acidic residues) spans 953–963 (LLEDNDSDSSD). Composition is skewed to low complexity over residues 964–977 (SSDSSDSSDSSDSS), 1027–1038 (ASTATSTTTTTT), 1047–1065 (PTSKIKPSSTIPSQPTSIT), 1073–1115 (STTS…SSSS), and 1127–1156 (KKPISTINNNTLNNNTNSSINKIASNSTST). The span at 1157 to 1166 (LGNKNLGTPS) shows a compositional bias: polar residues. Composition is skewed to low complexity over residues 1215 to 1258 (NTTS…TTTV) and 1403 to 1424 (NTSSTTSSASSSSSSSISNGNN). Residues 1425-1440 (SDKKRNRDQPITDTSK) show a composition bias toward basic and acidic residues. Composition is skewed to low complexity over residues 1444–1465 (SSSSSSSSSSSSSSSTNARSSS), 1490–1520 (LSTPSSSSSSSSSSSSSSTTTTTTSTGSTIP), 1527–1539 (SSSSSNNNNSLSP), and 1551–1560 (AAAAKKQQTQ). The segment covering 1561 to 1571 (ELSDSTAKSLS) has biased composition (polar residues). 2 stretches are compositionally biased toward low complexity: residues 1599 to 1609 (SSNVSGKSDSS) and 1804 to 1817 (INNNNNTHSNSPDE). Residues 1884–1930 (NNMGNMNNQFNNMNNNNNNNQFNNGYNNNNNNNNNNNNNNNNNNNNM) are a coiled coil.

Belongs to the Mediator complex subunit 26 family. As to quaternary structure, component of the Mediator complex.

It localises to the nucleus. In terms of biological role, component of the Mediator complex, a coactivator involved in the regulated transcription of nearly all RNA polymerase II-dependent genes. Mediator functions as a bridge to convey information from gene-specific regulatory proteins to the basal RNA polymerase II transcription machinery. Mediator is recruited to promoters by direct interactions with regulatory proteins and serves as a scaffold for the assembly of a functional preinitiation complex with RNA polymerase II and the general transcription factors. The sequence is that of Putative mediator of RNA polymerase II transcription subunit 26 (med26) from Dictyostelium discoideum (Social amoeba).